Here is a 561-residue protein sequence, read N- to C-terminus: Asparagine synthetase [glutamine-hydrolyzing] (561 aa).

The active-site For GATase activity is the C2. A Glutamine amidotransferase type-2 domain is found at C2–K191. L-glutamine contacts are provided by residues R49–V53, N75–E77, and D97. One can recognise an Asparagine synthetase domain in the interval H213–Y536. ATP contacts are provided by residues L256, I288, and S363–G364. K385 carries the post-translational modification N6-acetyllysine. At T545 the chain carries Phosphothreonine. A Phosphoserine modification is found at S557.

It carries out the reaction L-aspartate + L-glutamine + ATP + H2O = L-asparagine + L-glutamate + AMP + diphosphate + H(+). Its pathway is amino-acid biosynthesis; L-asparagine biosynthesis; L-asparagine from L-aspartate (L-Gln route): step 1/1. In Cricetulus griseus (Chinese hamster), this protein is Asparagine synthetase [glutamine-hydrolyzing] (ASNS).